The sequence spans 489 residues: Protein K15 (489 aa).

The signal sequence occupies residues 1–26 (MKTLIFFWNLWLWALLVCFWCITLVC). 11 consecutive transmembrane segments (helical) span residues 29 to 49 (TNSI…VSAI), 63 to 83 (WPSS…WNLS), 89 to 109 (TYAC…LTLI), 121 to 141 (HGIL…VHMS), 148 to 168 (WIFF…FATV), 175 to 195 (LVSS…VSCC), 200 to 220 (CTAT…TGII), 237 to 257 (FLLL…LLAI), 264 to 284 (IKGH…LYVW), 296 to 316 (MLHL…VMLL), and 324 to 344 (ILTM…LLVF).

In terms of assembly, interacts with host LYN; this interaction modulates B-cells signaling. Interacts with host ITSN2.

It is found in the host cell membrane. The protein localises to the host Golgi apparatus. Its subcellular location is the host trans-Golgi network. Its function is as follows. Plays a crucial role for reactivation of the virus from latency, early viral gene expression and virus production. Modulates host signaling pathways including activation of MAP kinases c-JUN-N-terminal kinase (JNK), ERK2, and NF-kappa-B resulting in the activation of AP-1 and NFAT-dependent gene expression in B-lymphocytes. When expressed in epithelial cells, induces the expression of several inflammatory and angiogenic genes. Also interferes with B-lymphocytes signaling through interaction with host LYN kinase. This chain is Protein K15 (K15), found in Human herpesvirus 8 type P (isolate GK18) (HHV-8).